The chain runs to 120 residues: Large ribosomal subunit protein uL22 (120 aa).

The disordered stretch occupies residues 1-25 (MFVNKKYTAKGKNLPSSPKKVRPIA).

This sequence belongs to the universal ribosomal protein uL22 family. As to quaternary structure, part of the 50S ribosomal subunit.

In terms of biological role, this protein binds specifically to 23S rRNA; its binding is stimulated by other ribosomal proteins, e.g. L4, L17, and L20. It is important during the early stages of 50S assembly. It makes multiple contacts with different domains of the 23S rRNA in the assembled 50S subunit and ribosome. Functionally, the globular domain of the protein is located near the polypeptide exit tunnel on the outside of the subunit, while an extended beta-hairpin is found that lines the wall of the exit tunnel in the center of the 70S ribosome. The protein is Large ribosomal subunit protein uL22 of Borrelia duttonii (strain Ly).